A 392-amino-acid chain; its full sequence is GTPase Obg (392 aa).

One can recognise an Obg domain in the interval 1-159 (MKFVDEATIL…RDLQLELMLL (159 aa)). The segment at 127–148 (NTRFKSSVNRTPRQKTMGTPGD) is disordered. The segment covering 129–143 (RFKSSVNRTPRQKTM) has biased composition (polar residues). One can recognise an OBG-type G domain in the interval 160–333 (ADVGMLGMPN…LCWDVMTFII (174 aa)). GTP is bound by residues 166–173 (GMPNAGKS), 191–195 (FTTLV), 213–216 (DIPG), 283–286 (NKID), and 314–316 (SAA). 2 residues coordinate Mg(2+): Ser173 and Thr193. Residues 362–386 (EEAEAEAEDDEDWDDDWDEDDEEGV) show a composition bias toward acidic residues. A disordered region spans residues 362–392 (EEAEAEAEDDEDWDDDWDEDDEEGVEFIYKR).

Belongs to the TRAFAC class OBG-HflX-like GTPase superfamily. OBG GTPase family. Monomer. Mg(2+) is required as a cofactor.

It localises to the cytoplasm. An essential GTPase which binds GTP, GDP and possibly (p)ppGpp with moderate affinity, with high nucleotide exchange rates and a fairly low GTP hydrolysis rate. Plays a role in control of the cell cycle, stress response, ribosome biogenesis and in those bacteria that undergo differentiation, in morphogenesis control. This Klebsiella pneumoniae subsp. pneumoniae (strain ATCC 700721 / MGH 78578) protein is GTPase Obg.